The sequence spans 1136 residues: Type I inositol polyphosphate 5-phosphatase 13 (1136 aa).

WD repeat units follow at residues 147–185, 205–244, 259–297, 436–475, and 515–552; these read ETQT…EAGC, VTTS…VSHD, AHRG…KSLL, EDTR…RDVN, and SHNE…PLDN. 2 catalytic regions span residues 782 to 798 and 861 to 876; these read DMVA…FGIT and KKRI…YRDT. Lys-940 participates in a covalent cross-link: Glycyl lysine isopeptide (Lys-Gly) (interchain with G-Cter in ubiquitin). Positions 1104–1136 are disordered; it reads KNLGGSRRYPTDITRNGSTRPRTEDSVRRGKSR. A compositionally biased stretch (basic and acidic residues) spans 1124 to 1136; that stretch reads PRTEDSVRRGKSR.

Belongs to the inositol polyphosphate 5-phosphatase family. As to quaternary structure, interacts with KIN10, but not with PHOT1. Mg(2+) serves as cofactor. Expressed in young seedlings and flowers. Highly expressed in anther and pollen grains, but not in pistils. Not detected in maturated roots, stems and rosette leaves.

It localises to the nucleus. The catalysed reaction is 1D-myo-inositol 1,4,5-trisphosphate + H2O = 1D-myo-inositol 1,4-bisphosphate + phosphate. In terms of biological role, converts inositol 1,4,5-trisphosphate (Ins(1,4,5)P3) to inositol 1,4-bisphosphate. Modulates cotyledon vein development through regulating auxin homeostasis. Involved in blue light responses. Decreases the amount of KIN10 degraded by the proteasome under low nutrient conditions. Participates with IP5P12 in the control of Ins(1,4,5)P3/Ca(2+) levels that is crucial for maintaining pollen dormancy and regulating early germination of pollen. May modulate auxin transport by regulating vesicle trafficking and thereby plays a role in root gravitropism. The sequence is that of Type I inositol polyphosphate 5-phosphatase 13 from Arabidopsis thaliana (Mouse-ear cress).